A 66-amino-acid chain; its full sequence is Large ribosomal subunit protein bL35 (66 aa).

The tract at residues 1–26 (MPKQKTHRGAAKRFKKTGSGKLKRSH) is disordered.

This sequence belongs to the bacterial ribosomal protein bL35 family.

In Bacillus anthracis, this protein is Large ribosomal subunit protein bL35.